We begin with the raw amino-acid sequence, 475 residues long: Aspartyl/glutamyl-tRNA(Asn/Gln) amidotransferase subunit B (475 aa).

The protein belongs to the GatB/GatE family. GatB subfamily. In terms of assembly, heterotrimer of A, B and C subunits.

It carries out the reaction L-glutamyl-tRNA(Gln) + L-glutamine + ATP + H2O = L-glutaminyl-tRNA(Gln) + L-glutamate + ADP + phosphate + H(+). It catalyses the reaction L-aspartyl-tRNA(Asn) + L-glutamine + ATP + H2O = L-asparaginyl-tRNA(Asn) + L-glutamate + ADP + phosphate + 2 H(+). Functionally, allows the formation of correctly charged Asn-tRNA(Asn) or Gln-tRNA(Gln) through the transamidation of misacylated Asp-tRNA(Asn) or Glu-tRNA(Gln) in organisms which lack either or both of asparaginyl-tRNA or glutaminyl-tRNA synthetases. The reaction takes place in the presence of glutamine and ATP through an activated phospho-Asp-tRNA(Asn) or phospho-Glu-tRNA(Gln). This is Aspartyl/glutamyl-tRNA(Asn/Gln) amidotransferase subunit B from Chlorobium phaeobacteroides (strain DSM 266 / SMG 266 / 2430).